We begin with the raw amino-acid sequence, 1005 residues long: Beta-galactosidase (1005 aa).

Glu-455 serves as the catalytic Proton donor. Residue Glu-526 is the Nucleophile of the active site.

It belongs to the glycosyl hydrolase 2 family.

The catalysed reaction is Hydrolysis of terminal non-reducing beta-D-galactose residues in beta-D-galactosides.. The polypeptide is Beta-galactosidase (lacZ) (Actinobacillus pleuropneumoniae (Haemophilus pleuropneumoniae)).